A 265-amino-acid polypeptide reads, in one-letter code: Tryptophan synthase alpha chain (265 aa).

Catalysis depends on proton acceptor residues E49 and D60.

Belongs to the TrpA family. As to quaternary structure, tetramer of two alpha and two beta chains.

It carries out the reaction (1S,2R)-1-C-(indol-3-yl)glycerol 3-phosphate + L-serine = D-glyceraldehyde 3-phosphate + L-tryptophan + H2O. Its pathway is amino-acid biosynthesis; L-tryptophan biosynthesis; L-tryptophan from chorismate: step 5/5. Its function is as follows. The alpha subunit is responsible for the aldol cleavage of indoleglycerol phosphate to indole and glyceraldehyde 3-phosphate. The polypeptide is Tryptophan synthase alpha chain (Paracoccus denitrificans (strain Pd 1222)).